The chain runs to 101 residues: Feather keratin Cos1-1/Cos1-3/Cos2-1 (101 aa).

N-acetylserine is present on S2.

The protein belongs to the avian keratin family. As to quaternary structure, the avian keratins (F-ker, S-ker, C-ker and B-ker) are a complex mixture of very similar polypeptides.

This is Feather keratin Cos1-1/Cos1-3/Cos2-1 from Columba livia (Rock dove).